We begin with the raw amino-acid sequence, 211 residues long: Urease accessory protein UreF (211 aa).

The tract at residues 68–93 is disordered; that stretch reads LAPDGADRETDARTPSPAARDASRSQ.

Belongs to the UreF family. As to quaternary structure, ureD, UreF and UreG form a complex that acts as a GTP-hydrolysis-dependent molecular chaperone, activating the urease apoprotein by helping to assemble the nickel containing metallocenter of UreC. The UreE protein probably delivers the nickel.

Its subcellular location is the cytoplasm. Functionally, required for maturation of urease via the functional incorporation of the urease nickel metallocenter. This Mycobacterium marinum (strain ATCC BAA-535 / M) protein is Urease accessory protein UreF.